We begin with the raw amino-acid sequence, 234 residues long: MKNKNNKLADCPYITLEKALGYSFKDKHLLEQALTHKSCKLALNNERLEFLGDAVLGLVIGELLYHKFYQYDEGKLSKLRASIVSAQGFTKLARAISLQDYLRVSSSEETSKGREKPSILSSAFEALMAGVYLEAGLDKVRKIMQNLLNRAYKRLDLEHLSVDYKTALQELTQAQFCVIPTYQLLKEKGPAHHKEFEMVLYIQNQMYATAKGKSKKEAEQQCAYQALQKLKGIK.

One can recognise an RNase III domain in the interval 13 to 136 (YITLEKALGY…LMAGVYLEAG (124 aa)). Residue Glu49 coordinates Mg(2+). Asp53 is an active-site residue. The Mg(2+) site is built by Ser122 and Glu125. Glu125 is an active-site residue. Residues 163 to 232 (DYKTALQELT…AYQALQKLKG (70 aa)) form the DRBM domain.

It belongs to the ribonuclease III family. In terms of assembly, homodimer. The cofactor is Mg(2+).

The protein resides in the cytoplasm. The catalysed reaction is Endonucleolytic cleavage to 5'-phosphomonoester.. Digests double-stranded RNA. Involved in the processing of primary rRNA transcript to yield the immediate precursors to the large and small rRNAs (23S and 16S). Processes some mRNAs, and tRNAs when they are encoded in the rRNA operon. Processes pre-crRNA and tracrRNA of type II CRISPR loci if present in the organism. The chain is Ribonuclease 3 from Helicobacter acinonychis (strain Sheeba).